Consider the following 507-residue polypeptide: Alkyl hydroperoxide reductase subunit F (507 aa).

FAD is bound at residue 207–222 (DVLIVGGGPASGSAAI). A disulfide bridge connects residues Cys335 and Cys338. Residue 347–361 (DVAVIGGGNSGVEAA) coordinates NAD(+). 467 to 477 (TNVPGIFAAGD) contacts FAD.

This sequence belongs to the class-II pyridine nucleotide-disulfide oxidoreductase family. As to quaternary structure, homodimer. FAD serves as cofactor.

Serves to protect the cell against DNA damage by alkyl hydroperoxides. It can use either NADH or NADPH as electron donor for direct reduction of redox dyes or of alkyl hydroperoxides when combined with the AhpC protein. This is Alkyl hydroperoxide reductase subunit F (ahpF) from Staphylococcus aureus (strain MRSA252).